The chain runs to 58 residues: MQAKNNKPSDDFYDSADMQELAGETPIGWSATCLDQTICYYLDCDQEHFEDLDNSNHN.

It is found in the plastid. The protein localises to the chloroplast. This is an uncharacterized protein from Porphyra purpurea (Red seaweed).